Here is a 226-residue protein sequence, read N- to C-terminus: Glutathione peroxidase 3 (226 aa).

The signal sequence occupies residues Met1 to Gly24. Sec73 is an active-site residue. A non-standard amino acid (selenocysteine) is located at residue Sec73.

It belongs to the glutathione peroxidase family. As to quaternary structure, homotetramer. Secreted in plasma.

The protein localises to the secreted. The catalysed reaction is 2 glutathione + H2O2 = glutathione disulfide + 2 H2O. It carries out the reaction tert-butyl hydroperoxide + 2 glutathione = tert-butanol + glutathione disulfide + H2O. Protects cells and enzymes from oxidative damage, by catalyzing the reduction of hydrogen peroxide, lipid peroxides and organic hydroperoxide, by glutathione. The protein is Glutathione peroxidase 3 of Pongo pygmaeus (Bornean orangutan).